The chain runs to 215 residues: ATP phosphoribosyltransferase (215 aa).

This sequence belongs to the ATP phosphoribosyltransferase family. Short subfamily. In terms of assembly, heteromultimer composed of HisG and HisZ subunits.

It is found in the cytoplasm. The catalysed reaction is 1-(5-phospho-beta-D-ribosyl)-ATP + diphosphate = 5-phospho-alpha-D-ribose 1-diphosphate + ATP. It participates in amino-acid biosynthesis; L-histidine biosynthesis; L-histidine from 5-phospho-alpha-D-ribose 1-diphosphate: step 1/9. Functionally, catalyzes the condensation of ATP and 5-phosphoribose 1-diphosphate to form N'-(5'-phosphoribosyl)-ATP (PR-ATP). Has a crucial role in the pathway because the rate of histidine biosynthesis seems to be controlled primarily by regulation of HisG enzymatic activity. The chain is ATP phosphoribosyltransferase from Prochlorococcus marinus (strain MIT 9215).